An 80-amino-acid chain; its full sequence is Exodeoxyribonuclease 7 small subunit (80 aa).

It belongs to the XseB family. Heterooligomer composed of large and small subunits.

The protein localises to the cytoplasm. The enzyme catalyses Exonucleolytic cleavage in either 5'- to 3'- or 3'- to 5'-direction to yield nucleoside 5'-phosphates.. Its function is as follows. Bidirectionally degrades single-stranded DNA into large acid-insoluble oligonucleotides, which are then degraded further into small acid-soluble oligonucleotides. This is Exodeoxyribonuclease 7 small subunit from Pseudomonas fluorescens (strain ATCC BAA-477 / NRRL B-23932 / Pf-5).